The following is a 426-amino-acid chain: LIM/homeobox protein Lhx2 (426 aa).

A compositionally biased stretch (basic and acidic residues) spans 14 to 24 (VIDEMDRRQER). A disordered region spans residues 14–42 (VIDEMDRRQERGSGISSAIDRGDTETTMP). LIM zinc-binding domains follow at residues 52 to 104 (CAGC…CKED) and 114 to 167 (CARC…CRLH). The segment at 248–268 (DAEHLDRDQPYPSSQKTKRMR) is disordered. Positions 264–323 (TKRMRTSFKHHQLRTMKSYFAINHNPDAKDLKQLAQKTGLTKRVLQVWFQNARAKFRRNL) form a DNA-binding region, homeobox. Residues 305–321 (KRVLQVWFQNARAKFRR) carry the Nuclear localization signal motif. Over residues 326–354 (QENTGVDKTSDATLQTGTPSGPASELSNA) the composition is skewed to polar residues. Residues 326–370 (QENTGVDKTSDATLQTGTPSGPASELSNASLSPSSTPTTLTDLTS) are disordered. Residues 355–370 (SLSPSSTPTTLTDLTS) show a composition bias toward low complexity.

In terms of assembly, interacts (via LIM domains) with CITED2. Interacts with POU4F2. In terms of tissue distribution, found in discrete regions of the developing CNS, primarily in diencephalic and telencephalic structures and a subset of lymphoid tissues. Also found in embryonic spinal cord and fetal liver.

Its subcellular location is the nucleus. In terms of biological role, acts as a transcriptional activator. Stimulates the promoter of the alpha-glycoprotein gene. Transcriptional regulatory protein involved in the control of cell differentiation in developing lymphoid and neural cell types. The sequence is that of LIM/homeobox protein Lhx2 (Lhx2) from Rattus norvegicus (Rat).